A 100-amino-acid polypeptide reads, in one-letter code: Putative protein BCL8 (100 aa).

In terms of tissue distribution, expressed in prostate and testis.

This chain is Putative protein BCL8 (NBEAP1), found in Homo sapiens (Human).